A 270-amino-acid chain; its full sequence is Putative pyruvate, phosphate dikinase regulatory protein (270 aa).

Position 148 to 155 (148 to 155) interacts with ADP; it reads GVSRTSKT.

It belongs to the pyruvate, phosphate/water dikinase regulatory protein family. PDRP subfamily.

The catalysed reaction is N(tele)-phospho-L-histidyl/L-threonyl-[pyruvate, phosphate dikinase] + ADP = N(tele)-phospho-L-histidyl/O-phospho-L-threonyl-[pyruvate, phosphate dikinase] + AMP + H(+). It carries out the reaction N(tele)-phospho-L-histidyl/O-phospho-L-threonyl-[pyruvate, phosphate dikinase] + phosphate + H(+) = N(tele)-phospho-L-histidyl/L-threonyl-[pyruvate, phosphate dikinase] + diphosphate. Functionally, bifunctional serine/threonine kinase and phosphorylase involved in the regulation of the pyruvate, phosphate dikinase (PPDK) by catalyzing its phosphorylation/dephosphorylation. The chain is Putative pyruvate, phosphate dikinase regulatory protein from Bacillus cereus (strain B4264).